The primary structure comprises 114 residues: Head formation protein (114 aa).

Acidic residues predominate over residues 1–14; that stretch reads MNKDDLDLDLEIID. A disordered region spans residues 1–26; sequence MNKDDLDLDLEIIDESPSSEGEEERK.

Its function is as follows. Helps head vertex assembly. This chain is Head formation protein (40), found in Escherichia coli (Bacteriophage T4).